Reading from the N-terminus, the 128-residue chain is MKKVKTVGKSKKEFITGVVHIRATFNNTFVNVTDVHGNTLCQTSVGACGFSGSRKSTPYAAGKAAEAAAKNAIERFGMKVVSVIIRGPGFGTEAAVKALQSCGLTVTSIADKTAIPHNGCRLRKKRRV.

This sequence belongs to the universal ribosomal protein uS11 family. Part of the 30S ribosomal subunit. Interacts with proteins S7 and S18. Binds to IF-3.

Functionally, located on the platform of the 30S subunit, it bridges several disparate RNA helices of the 16S rRNA. Forms part of the Shine-Dalgarno cleft in the 70S ribosome. The sequence is that of Small ribosomal subunit protein uS11 from Wolbachia sp. subsp. Drosophila simulans (strain wRi).